A 277-amino-acid polypeptide reads, in one-letter code: Putative gamma-glutamylcyclotransferase YkqA (277 aa).

8–11 contributes to the substrate binding site; sequence YGTL. Catalysis depends on Glu-205, which acts as the Proton acceptor.

Belongs to the gamma-glutamylcyclotransferase family.

In terms of biological role, putative gamma-glutamylcyclotransferase. This is Putative gamma-glutamylcyclotransferase YkqA (ykqA) from Bacillus subtilis (strain 168).